Reading from the N-terminus, the 335-residue chain is Acyl-CoA Delta(11) desaturase (335 aa).

The next 3 helical transmembrane spans lie at 39–59 (LLTF…CFTS), 64–84 (TIIL…AGAH), and 98–118 (LQII…IHWI). The short motif at 84 to 89 (HRLWAH) is the Histidine box-1 element. A Histidine box-2 motif is present at residues 121 to 125 (HRMHH). The next 2 membrane-spanning stretches (helical) occupy residues 182–202 (AIPF…MYFW) and 213–235 (TMLR…HLYG). A Histidine box-3 motif is present at residues 261–265 (HNYHH). Residues 312–335 (MKRTGDGTDVSGQKYSCESSEVLQ) are disordered. Polar residues predominate over residues 321 to 335 (VSGQKYSCESSEVLQ).

The protein belongs to the fatty acid desaturase type 1 family. It depends on Fe cation as a cofactor. As to expression, detected in pheromone gland.

The protein resides in the membrane. It carries out the reaction an 11,12-saturated fatty acyl-CoA + 2 Fe(II)-[cytochrome b5] + O2 + 2 H(+) = an (11Z)-Delta(11)-fatty acyl-CoA + 2 Fe(III)-[cytochrome b5] + 2 H2O. Functionally, catalyzes the formation of Delta(11) fatty acyl precursors in the pheromone gland, with a preference for myristic acid. The sequence is that of Acyl-CoA Delta(11) desaturase from Choristoneura rosaceana (Oblique banded leafroller).